Here is a 427-residue protein sequence, read N- to C-terminus: 5-hydroxybenzimidazole synthase BzaB (427 aa).

Belongs to the ThiC family. 5-hydroxybenzimidazole synthase subfamily. [4Fe-4S] cluster serves as cofactor.

The enzyme catalyses 5-amino-1-(5-phospho-beta-D-ribosyl)imidazole + AH2 + S-adenosyl-L-methionine = 5-hydroxybenzimidazole + 5'-deoxyadenosine + formate + L-methionine + A + NH4(+) + phosphate + 2 H(+). It functions in the pathway cofactor biosynthesis; adenosylcobalamin biosynthesis. Together with BzaA, catalyzes the conversion of aminoimidazole ribotide (AIR) to 5-hydroxybenzimidazole (5-HBI) in a radical S-adenosyl-L-methionine (SAM)-dependent reaction. Is thus involved in the anaerobic biosynthesis of dimethylbenzimidazole (DMB), the lower axial ligand of vitamin B12 (cobalamin). Requires BzaA for catalytic activity, as BzaB alone displays no activity. The protein is 5-hydroxybenzimidazole synthase BzaB of Eubacterium limosum.